Reading from the N-terminus, the 94-residue chain is Small ribosomal subunit protein bS18 (94 aa).

The protein belongs to the bacterial ribosomal protein bS18 family. In terms of assembly, part of the 30S ribosomal subunit. Forms a tight heterodimer with protein bS6.

In terms of biological role, binds as a heterodimer with protein bS6 to the central domain of the 16S rRNA, where it helps stabilize the platform of the 30S subunit. This is Small ribosomal subunit protein bS18 from Leptospira biflexa serovar Patoc (strain Patoc 1 / Ames).